Reading from the N-terminus, the 858-residue chain is Leucine--tRNA ligase (858 aa).

Residues 43–54 (PYPSGDGLHVGH) carry the 'HIGH' region motif. Residues 629–633 (KMSKS) carry the 'KMSKS' region motif. K632 is a binding site for ATP.

It belongs to the class-I aminoacyl-tRNA synthetase family.

It localises to the cytoplasm. It carries out the reaction tRNA(Leu) + L-leucine + ATP = L-leucyl-tRNA(Leu) + AMP + diphosphate. The chain is Leucine--tRNA ligase from Treponema denticola (strain ATCC 35405 / DSM 14222 / CIP 103919 / JCM 8153 / KCTC 15104).